A 208-amino-acid chain; its full sequence is Inducible T-cell costimulator (208 aa).

The first 19 residues, 1-19 (MKSDLWYFLLFCFQVEALT), serve as a signal peptide directing secretion. Over 20-140 (GEINDSTKSE…YESQTCCQLK (121 aa)) the chain is Extracellular. N-linked (GlcNAc...) asparagine glycosylation is present at asparagine 23. The region spanning 30–132 (MFTFHDGGVQ…ISREYLNVYE (103 aa)) is the Ig-like V-type domain. 2 cysteine pairs are disulfide-bonded: cysteine 42–cysteine 108 and cysteine 63–cysteine 82. The N-linked (GlcNAc...) asparagine glycan is linked to asparagine 122. Residues 141–161 (FWLPIGCAAFVVVYIFGCIFL) traverse the membrane as a helical segment. Residues 162-208 (CWLTKKKYRSSVHDPNSEYMFMAAVNTAKKPGLTGVTHNLELCGTQA) lie on the Cytoplasmic side of the membrane.

In terms of assembly, homodimer; disulfide-linked. Interacts with ICOSLG. Interacts with PIK3R1. Interacts with TBK1; this interaction is critical for the maturation of T follicular regulatory cells. In terms of processing, N-glycosylated.

It is found in the cell membrane. Stimulatory receptor expressed in activated or antigen-experienced T-cells that plays an important role in the immune response. Upon binding to its ligand ICOSL expressed on antigen presenting cells (APCs), delivers costimulatory signals that enhances all basic T-cell responses to a foreign antigen, namely proliferation, secretion of lymphokines including IL10, up-regulation of molecules that mediate cell-cell interaction, and effective help for antibody secretion by B-cells. Also acts as a costimulatory receptor critical for the differentiation of T follicular regulatory cells upon immune challenges such as viral infection. Mechanistically, potentiates TCR-induced calcium flux by augmenting PLCG1 activation and actin remodeling. In addition, activates PI3K signaling pathways independently of calcium flux. Essential both for efficient interaction between T and B-cells and for normal antibody responses to T-cell dependent antigens. Prevents the apoptosis of pre-activated T-cells. Plays a critical role in CD40-mediated class switching of immunoglobin isotypes. The protein is Inducible T-cell costimulator (ICOS) of Canis lupus familiaris (Dog).